Consider the following 461-residue polypeptide: Cysteine--tRNA ligase (461 aa).

C28 contacts Zn(2+). A 'HIGH' region motif is present at residues 30–40 (ITVYDLCHIGH). Zn(2+) contacts are provided by C209, H234, and E238. The 'KMSKS' region motif lies at 266 to 270 (KMSKS). Position 269 (K269) interacts with ATP.

Belongs to the class-I aminoacyl-tRNA synthetase family. In terms of assembly, monomer. Requires Zn(2+) as cofactor.

The protein resides in the cytoplasm. It carries out the reaction tRNA(Cys) + L-cysteine + ATP = L-cysteinyl-tRNA(Cys) + AMP + diphosphate. The polypeptide is Cysteine--tRNA ligase (Klebsiella pneumoniae (strain 342)).